A 270-amino-acid polypeptide reads, in one-letter code: Homeobox protein Hox-D12 (270 aa).

The disordered stretch occupies residues 102–122; it reads APEAAAGPEERGRTRPSFAPE. A DNA-binding region (homeobox) is located at residues 202–261; the sequence is ARKKRKPYTKQQIAELENEFLVNEFINRQKRKELSNRLNLSDQQVKIWFQNRRMKKKRVV.

It belongs to the Abd-B homeobox family.

It localises to the nucleus. Its function is as follows. Sequence-specific transcription factor which is part of a developmental regulatory system that provides cells with specific positional identities on the anterior-posterior axis. In Homo sapiens (Human), this protein is Homeobox protein Hox-D12 (HOXD12).